The primary structure comprises 466 residues: 3-isopropylmalate dehydratase large subunit (466 aa).

The [4Fe-4S] cluster site is built by Cys347, Cys407, and Cys410.

It belongs to the aconitase/IPM isomerase family. LeuC type 1 subfamily. Heterodimer of LeuC and LeuD. The cofactor is [4Fe-4S] cluster.

It catalyses the reaction (2R,3S)-3-isopropylmalate = (2S)-2-isopropylmalate. The protein operates within amino-acid biosynthesis; L-leucine biosynthesis; L-leucine from 3-methyl-2-oxobutanoate: step 2/4. Functionally, catalyzes the isomerization between 2-isopropylmalate and 3-isopropylmalate, via the formation of 2-isopropylmaleate. The chain is 3-isopropylmalate dehydratase large subunit from Cronobacter sakazakii (strain ATCC BAA-894) (Enterobacter sakazakii).